The sequence spans 79 residues: Probable [Fe-S]-dependent transcriptional repressor (79 aa).

Iron-sulfur cluster-binding residues include C56, C61, C64, and C71.

It belongs to the FeoC family.

In terms of biological role, may function as a transcriptional regulator that controls feoABC expression. This chain is Probable [Fe-S]-dependent transcriptional repressor, found in Klebsiella pneumoniae subsp. pneumoniae (strain ATCC 700721 / MGH 78578).